Here is a 113-residue protein sequence, read N- to C-terminus: Iron-sulfur cluster assembly protein CyaY (113 aa).

It belongs to the frataxin family.

Involved in iron-sulfur (Fe-S) cluster assembly. May act as a regulator of Fe-S biogenesis. The chain is Iron-sulfur cluster assembly protein CyaY from Ralstonia nicotianae (strain ATCC BAA-1114 / GMI1000) (Ralstonia solanacearum).